Consider the following 440-residue polypeptide: Adenylyltransferase and sulfurtransferase UBA4 (440 aa).

Methionine 1 bears the N-acetylmethionine mark. ATP-binding positions include glycine 77, aspartate 98, 105–109 (SNLHR), lysine 122, and 166–167 (DS). Residues cysteine 208 and cysteine 211 each contribute to the Zn(2+) site. The active-site Glycyl thioester intermediate; for adenylyltransferase activity is the cysteine 225. Zn(2+) contacts are provided by cysteine 286 and cysteine 289. A Phosphoserine modification is found at serine 326. The Rhodanese domain maps to 339–438 (FLAKHIFLDV…YIDDIDQTIP (100 aa)). Cysteine 397 (cysteine persulfide intermediate; for sulfurtransferase activity) is an active-site residue.

In the N-terminal section; belongs to the HesA/MoeB/ThiF family. UBA4 subfamily. The cofactor is Zn(2+).

It is found in the cytoplasm. The protein localises to the cytosol. It functions in the pathway tRNA modification; 5-methoxycarbonylmethyl-2-thiouridine-tRNA biosynthesis. Its function is as follows. Plays a central role in 2-thiolation of mcm(5)S(2)U at tRNA wobble positions of cytosolic tRNA(Lys), tRNA(Glu) and tRNA(Gln). Acts by mediating the C-terminal thiocarboxylation of sulfur carrier URM1. Its N-terminus first activates URM1 as acyl-adenylate (-COAMP), then the persulfide sulfur on the catalytic cysteine is transferred to URM1 to form thiocarboxylation (-COSH) of its C-terminus. The reaction probably involves hydrogen sulfide that is generated from the persulfide intermediate and that acts as a nucleophile towards URM1. Subsequently, a transient disulfide bond is formed. Does not use thiosulfate as sulfur donor; NFS1 probably acting as a sulfur donor for thiocarboxylation reactions. Prior mcm(5) tRNA modification by the elongator complex is required for 2-thiolation. May also be involved in protein urmylation. This chain is Adenylyltransferase and sulfurtransferase UBA4, found in Saccharomyces cerevisiae (strain RM11-1a) (Baker's yeast).